The primary structure comprises 402 residues: Alkaline proteinase (402 aa).

Positions 1 to 20 (MVTLRRLAVLLGAIPAALAA) are cleaved as a signal peptide. The propeptide occupies 21-120 (PTTQKREVVP…EQDEGEFSTA (100 aa)). Positions 32-108 (KYIVTLKEGA…EVEEDQIWHL (77 aa)) constitute an Inhibitor I9 domain. Residues 128-402 (AWGLGTISHR…NRILYNGNGA (275 aa)) form the Peptidase S8 domain. Residues Asp160, His191, and Ser347 each act as charge relay system in the active site. Residues 382-392 (GRVSNPGSGSP) show a composition bias toward polar residues. Positions 382 to 402 (GRVSNPGSGSPNRILYNGNGA) are disordered.

The protein belongs to the peptidase S8 family.

The sequence is that of Alkaline proteinase (ALP) from Hapsidospora chrysogena (Acremonium chrysogenum).